A 245-amino-acid polypeptide reads, in one-letter code: Pyridoxine 5'-phosphate synthase (245 aa).

Residue N9 participates in 3-amino-2-oxopropyl phosphate binding. 11 to 12 (DH) contributes to the 1-deoxy-D-xylulose 5-phosphate binding site. Residue R20 coordinates 3-amino-2-oxopropyl phosphate. H45 functions as the Proton acceptor in the catalytic mechanism. 2 residues coordinate 1-deoxy-D-xylulose 5-phosphate: R47 and H52. E72 (proton acceptor) is an active-site residue. Residue T102 participates in 1-deoxy-D-xylulose 5-phosphate binding. The Proton donor role is filled by H193. 3-amino-2-oxopropyl phosphate is bound by residues G194 and 215–216 (GH).

Belongs to the PNP synthase family. As to quaternary structure, homooctamer; tetramer of dimers.

Its subcellular location is the cytoplasm. It catalyses the reaction 3-amino-2-oxopropyl phosphate + 1-deoxy-D-xylulose 5-phosphate = pyridoxine 5'-phosphate + phosphate + 2 H2O + H(+). The protein operates within cofactor biosynthesis; pyridoxine 5'-phosphate biosynthesis; pyridoxine 5'-phosphate from D-erythrose 4-phosphate: step 5/5. In terms of biological role, catalyzes the complicated ring closure reaction between the two acyclic compounds 1-deoxy-D-xylulose-5-phosphate (DXP) and 3-amino-2-oxopropyl phosphate (1-amino-acetone-3-phosphate or AAP) to form pyridoxine 5'-phosphate (PNP) and inorganic phosphate. The chain is Pyridoxine 5'-phosphate synthase from Shewanella oneidensis (strain ATCC 700550 / JCM 31522 / CIP 106686 / LMG 19005 / NCIMB 14063 / MR-1).